Consider the following 1598-residue polypeptide: Structural maintenance of chromosomes flexible hinge domain-containing protein GMI1 (1598 aa).

The disordered stretch occupies residues 1191-1218 (VTSAPTSEREESGYSTPHSKTTPPPESG). 2 coiled-coil regions span residues 1258–1301 (TEDL…ASLE) and 1565–1595 (EEMM…FTAM).

As to expression, highly expressed in closed buds and open flowers. Expressed at low levels in roots, stems, cauline leaves and siliques. Expressed in the region of the shoot and floral meristems.

The protein resides in the nucleus. Functionally, contributes to DNA double-strand break (DSB) repair via somatic homologous recombination. Functions downstream of ATM. The protein is Structural maintenance of chromosomes flexible hinge domain-containing protein GMI1 of Arabidopsis thaliana (Mouse-ear cress).